The following is a 285-amino-acid chain: Nucleotide-binding protein Glov_2163 (285 aa).

8–15 (GMSGSGKS) provides a ligand contact to ATP. 59-62 (DIRG) serves as a coordination point for GTP.

The protein belongs to the RapZ-like family.

Functionally, displays ATPase and GTPase activities. The chain is Nucleotide-binding protein Glov_2163 from Trichlorobacter lovleyi (strain ATCC BAA-1151 / DSM 17278 / SZ) (Geobacter lovleyi).